A 507-amino-acid chain; its full sequence is Glycerol kinase (507 aa).

Residue Thr14 participates in ADP binding. Positions 14, 15, and 16 each coordinate ATP. Thr14 is a binding site for sn-glycerol 3-phosphate. ADP is bound at residue Arg18. Residues Arg84, Glu85, Tyr137, and Asp247 each contribute to the sn-glycerol 3-phosphate site. Arg84, Glu85, Tyr137, Asp247, and Gln248 together coordinate glycerol. Thr269 and Gly312 together coordinate ADP. Positions 269, 312, 316, and 413 each coordinate ATP. 2 residues coordinate ADP: Gly413 and Asn417.

It belongs to the FGGY kinase family.

The enzyme catalyses glycerol + ATP = sn-glycerol 3-phosphate + ADP + H(+). Its pathway is polyol metabolism; glycerol degradation via glycerol kinase pathway; sn-glycerol 3-phosphate from glycerol: step 1/1. Its activity is regulated as follows. Inhibited by fructose 1,6-bisphosphate (FBP). Functionally, key enzyme in the regulation of glycerol uptake and metabolism. Catalyzes the phosphorylation of glycerol to yield sn-glycerol 3-phosphate. The protein is Glycerol kinase of Psychromonas ingrahamii (strain DSM 17664 / CCUG 51855 / 37).